Reading from the N-terminus, the 203-residue chain is LexA repressor (203 aa).

A DNA-binding region (H-T-H motif) is located at residues 29–49 (VREIGQEVGLSSSSTVHGYLK). Active-site for autocatalytic cleavage activity residues include Ser126 and Lys163.

Belongs to the peptidase S24 family. In terms of assembly, homodimer.

It carries out the reaction Hydrolysis of Ala-|-Gly bond in repressor LexA.. Represses a number of genes involved in the response to DNA damage (SOS response), including recA and lexA. In the presence of single-stranded DNA, RecA interacts with LexA causing an autocatalytic cleavage which disrupts the DNA-binding part of LexA, leading to derepression of the SOS regulon and eventually DNA repair. This chain is LexA repressor, found in Pelotomaculum thermopropionicum (strain DSM 13744 / JCM 10971 / SI).